The following is a 642-amino-acid chain: Arginine--tRNA ligase (642 aa).

The 'HIGH' region motif lies at 133–143 (VNPTKPLHMGH).

It belongs to the class-I aminoacyl-tRNA synthetase family.

Its subcellular location is the cytoplasm. The catalysed reaction is tRNA(Arg) + L-arginine + ATP = L-arginyl-tRNA(Arg) + AMP + diphosphate. The polypeptide is Arginine--tRNA ligase (Thermococcus kodakarensis (strain ATCC BAA-918 / JCM 12380 / KOD1) (Pyrococcus kodakaraensis (strain KOD1))).